The primary structure comprises 286 residues: MNDRRLLLVHAHPDDETIVTGATMARYAAEGAHITLVTCTLGEEGEVIPPELAHLASDREGGLGEYRVTELERACAALGVHDQRFLGGKGRYRDSGMMGAPTNSHPACFWQADVDTAAHELAAIIREVRPQVIVTYDDNGGYGHPDHIQAHRVTMRAFAQAADPSLPGTPWQARKLYAIAQPRKLLEESVARMQADPGPFTAPTAVEDIAPGTPDDLVTTRIDGSAYWEKKRDALQAHATQVAVAGTRFALSNGIAQEIHAVEYFTLLHGPEPRRGPDGYETDLFA.

His12, Asp15, and His147 together coordinate Zn(2+).

It belongs to the MshB deacetylase family. The cofactor is Zn(2+).

It catalyses the reaction 1D-myo-inositol 2-acetamido-2-deoxy-alpha-D-glucopyranoside + H2O = 1D-myo-inositol 2-amino-2-deoxy-alpha-D-glucopyranoside + acetate. Functionally, catalyzes the deacetylation of 1D-myo-inositol 2-acetamido-2-deoxy-alpha-D-glucopyranoside (GlcNAc-Ins) in the mycothiol biosynthesis pathway. The chain is 1D-myo-inositol 2-acetamido-2-deoxy-alpha-D-glucopyranoside deacetylase from Thermobifida fusca (strain YX).